The primary structure comprises 494 residues: E3 ubiquitin-protein ligase ari-1.1 (494 aa).

Positions 1–30 (MSSDDEINMDDSDSSQGEIDDGCMSDDDGI) are enriched in acidic residues. Residues 1–52 (MSSDDEINMDDSDSSQGEIDDGCMSDDDGIVLESREQNSSDYKDNGEPDNEV) form a disordered region. Residues 33 to 52 (ESREQNSSDYKDNGEPDNEV) show a composition bias toward basic and acidic residues. The tract at residues 124-331 (GDAECDICCS…SSWYSCNRFD (208 aa)) is TRIAD supradomain. Zn(2+) is bound by residues Cys128, Cys131, Cys142, His144, Cys147, Cys150, Cys169, Cys174, Cys214, Cys219, Cys235, Cys237, Cys242, Cys245, His250, Cys255, Cys282, and Cys285. The RING-type 1 zinc-finger motif lies at 128–174 (CDICCSLGELSGLSCNHRACTQCWKAYLTNKIANNAQSEIECMAPNC). An IBR-type zinc finger spans residues 194 to 255 (ATYRKLIVAS…GHDWHEPVNC (62 aa)). The RING-type 2; atypical zinc finger occupies 282 to 313 (CPKCMITIEKDGGCNHMTCKNTACRFEFCWMC). The active site involves Cys295. Zn(2+)-binding residues include Cys300, Cys305, Cys310, Cys313, His320, and Cys327. Residues 346 to 494 (RANLQRYLFY…ADQELWVFNE (149 aa)) are ariadne domain.

The protein belongs to the RBR family. Ariadne subfamily. Interacts with ubiquitin-conjugating enzyme E2 ubc-18.

It localises to the nucleus. It is found in the cytoplasm. It catalyses the reaction [E2 ubiquitin-conjugating enzyme]-S-ubiquitinyl-L-cysteine + [acceptor protein]-L-lysine = [E2 ubiquitin-conjugating enzyme]-L-cysteine + [acceptor protein]-N(6)-ubiquitinyl-L-lysine.. With respect to regulation, autoinhibited by the ariadne domain, which masks the second RING-type zinc finger that contains the active site and inhibits the E3 activity. Functionally, E3 ubiquitin-protein transferase, which catalyzes ubiquitination of target proteins together with ubiquitin-conjugating enzyme E2 ubc-18. Acts with ubc-18 to regulate pharyngeal development. This Caenorhabditis elegans protein is E3 ubiquitin-protein ligase ari-1.1.